Consider the following 261-residue polypeptide: tRNA pseudouridine synthase A (261 aa).

Asp-52 acts as the Nucleophile in catalysis. Substrate is bound at residue Tyr-111.

It belongs to the tRNA pseudouridine synthase TruA family. Homodimer.

The catalysed reaction is uridine(38/39/40) in tRNA = pseudouridine(38/39/40) in tRNA. In terms of biological role, formation of pseudouridine at positions 38, 39 and 40 in the anticodon stem and loop of transfer RNAs. The sequence is that of tRNA pseudouridine synthase A from Jannaschia sp. (strain CCS1).